Here is a 125-residue protein sequence, read N- to C-terminus: Small ribosomal subunit protein bS6 (125 aa).

The protein belongs to the bacterial ribosomal protein bS6 family.

Its function is as follows. Binds together with bS18 to 16S ribosomal RNA. This chain is Small ribosomal subunit protein bS6, found in Campylobacter jejuni subsp. jejuni serotype O:23/36 (strain 81-176).